The following is a 215-amino-acid chain: MASSASKFIKCVTVGDGAVGKTCMLICYTSNKFPTDYIPTVFDNFSANVVVEGTTVNLGLWDTAGQEDYNRLRPLSYRGADVFVLSFSLVSRASYENVFKKWIPELQHFAPGVPLVLVGTKLDLREDKHYLADHPGLSPVTTAQGEELRKLIGATYYIECSSKTQQNVKAVFDSAIKEVIKPLVKQKEKTKKKKKQKSNHGCLSNVLCGRIVTRH.

15-22 (GDGAVGKT) is a GTP binding site. Positions 37 to 45 (YIPTVFDNF) match the Effector region motif. GTP-binding positions include 62–66 (DTAGQ) and 120–123 (TKLD). S-palmitoyl cysteine attachment occurs at residues C202 and C208.

The protein belongs to the small GTPase superfamily. Rho family. As to quaternary structure, component of the active ARAC10-IRC5-KIN13A complex. Interacts with ICR5.

The protein localises to the membrane. Its subcellular location is the cytoplasm. It localises to the cytoskeleton. Involved in local disassembly of cortical microtubules when associated with ICR5 and KIN13A. In Arabidopsis thaliana (Mouse-ear cress), this protein is Rac-like GTP-binding protein ARAC10 (ARAC10).